The sequence spans 354 residues: Holliday junction branch migration complex subunit RuvB (354 aa).

Residues 4-198 (TTDYGASNTG…FGFTAHLDFY (195 aa)) are large ATPase domain (RuvB-L). ATP contacts are provided by residues leucine 37, arginine 38, glycine 79, lysine 82, threonine 83, threonine 84, 145 to 147 (EDF), arginine 188, tyrosine 198, and arginine 235. Threonine 83 contributes to the Mg(2+) binding site. Residues 199-269 (PHEELEKLIE…DVKEALALYQ (71 aa)) are small ATPAse domain (RuvB-S). The segment at 272–354 (SEGLDRLDIA…TPKDDVSKLF (83 aa)) is head domain (RuvB-H). Arginine 327 and arginine 332 together coordinate DNA.

This sequence belongs to the RuvB family. As to quaternary structure, homohexamer. Forms an RuvA(8)-RuvB(12)-Holliday junction (HJ) complex. HJ DNA is sandwiched between 2 RuvA tetramers; dsDNA enters through RuvA and exits via RuvB. An RuvB hexamer assembles on each DNA strand where it exits the tetramer. Each RuvB hexamer is contacted by two RuvA subunits (via domain III) on 2 adjacent RuvB subunits; this complex drives branch migration. In the full resolvosome a probable DNA-RuvA(4)-RuvB(12)-RuvC(2) complex forms which resolves the HJ.

The protein localises to the cytoplasm. The catalysed reaction is ATP + H2O = ADP + phosphate + H(+). In terms of biological role, the RuvA-RuvB-RuvC complex processes Holliday junction (HJ) DNA during genetic recombination and DNA repair, while the RuvA-RuvB complex plays an important role in the rescue of blocked DNA replication forks via replication fork reversal (RFR). RuvA specifically binds to HJ cruciform DNA, conferring on it an open structure. The RuvB hexamer acts as an ATP-dependent pump, pulling dsDNA into and through the RuvAB complex. RuvB forms 2 homohexamers on either side of HJ DNA bound by 1 or 2 RuvA tetramers; 4 subunits per hexamer contact DNA at a time. Coordinated motions by a converter formed by DNA-disengaged RuvB subunits stimulates ATP hydrolysis and nucleotide exchange. Immobilization of the converter enables RuvB to convert the ATP-contained energy into a lever motion, pulling 2 nucleotides of DNA out of the RuvA tetramer per ATP hydrolyzed, thus driving DNA branch migration. The RuvB motors rotate together with the DNA substrate, which together with the progressing nucleotide cycle form the mechanistic basis for DNA recombination by continuous HJ branch migration. Branch migration allows RuvC to scan DNA until it finds its consensus sequence, where it cleaves and resolves cruciform DNA. The protein is Holliday junction branch migration complex subunit RuvB of Bifidobacterium longum (strain NCC 2705).